The following is a 68-amino-acid chain: Metallothionein-3 (68 aa).

An N-acetylmethionine modification is found at M1. Positions 1–30 (MDPETCPCPTGGSCTCSDPCKCEGCTCASS) are beta. A divalent metal cation is bound by residues C6, C8, C14, C16, C20, C22, C25, and C27. The tract at residues 31–68 (KKSCCSCCPAECEKCAKDCVCKGGEGAEAEEKKCSCCQ) is alpha. S33 bears the Phosphoserine mark. Residues C34, C35, C37, C38, C42, C45, C49, C51, C64, C66, and C67 each contribute to the a divalent metal cation site.

It belongs to the metallothionein superfamily. Type 1 family.

Binds heavy metals. Contains five zinc and one copper atoms per polypeptide chain and only a negligible amount of cadmium. The polypeptide is Metallothionein-3 (MT3) (Bos mutus grunniens (Wild yak)).